The sequence spans 427 residues: GTPase Obg (427 aa).

The Obg domain maps to 1 to 158 (MFVDIAKIYV…LWVILELKVL (158 aa)). In terms of domain architecture, OBG-type G spans 159–330 (ADVGLIGYPN…VLKRAYELLK (172 aa)). GTP-binding positions include 165 to 172 (GYPNVGKS), 190 to 194 (FTTKY), 212 to 215 (DIPG), 282 to 285 (NKMD), and 311 to 313 (SAA). 2 residues coordinate Mg(2+): serine 172 and threonine 192. One can recognise an OCT domain in the interval 347-427 (FVYYKKKDVK…ILDVEFEYYE (81 aa)).

The protein belongs to the TRAFAC class OBG-HflX-like GTPase superfamily. OBG GTPase family. Monomer. Requires Mg(2+) as cofactor.

The protein resides in the cytoplasm. An essential GTPase which binds GTP, GDP and possibly (p)ppGpp with moderate affinity, with high nucleotide exchange rates and a fairly low GTP hydrolysis rate. Plays a role in control of the cell cycle, stress response, ribosome biogenesis and in those bacteria that undergo differentiation, in morphogenesis control. The chain is GTPase Obg from Caldicellulosiruptor bescii (strain ATCC BAA-1888 / DSM 6725 / KCTC 15123 / Z-1320) (Anaerocellum thermophilum).